The primary structure comprises 392 residues: NAD(P)H-quinone oxidoreductase subunit H, chloroplastic (392 aa).

The protein belongs to the complex I 49 kDa subunit family. NDH is composed of at least 16 different subunits, 5 of which are encoded in the nucleus.

The protein localises to the plastid. It is found in the chloroplast thylakoid membrane. It catalyses the reaction a plastoquinone + NADH + (n+1) H(+)(in) = a plastoquinol + NAD(+) + n H(+)(out). It carries out the reaction a plastoquinone + NADPH + (n+1) H(+)(in) = a plastoquinol + NADP(+) + n H(+)(out). Functionally, NDH shuttles electrons from NAD(P)H:plastoquinone, via FMN and iron-sulfur (Fe-S) centers, to quinones in the photosynthetic chain and possibly in a chloroplast respiratory chain. The immediate electron acceptor for the enzyme in this species is believed to be plastoquinone. Couples the redox reaction to proton translocation, and thus conserves the redox energy in a proton gradient. The chain is NAD(P)H-quinone oxidoreductase subunit H, chloroplastic from Marchantia polymorpha (Common liverwort).